The chain runs to 273 residues: MHDAQIRVAIAGAGGRMGRQLIQAALQMEGVALGAALEREGSSLVGSDAGELAGAGKAGVAVQSSLTAVKDDFDVLIDFTRPEGTLNHLAFCREHGKGMVIGTTGFDDAGKQAIRDAAQEIAIVFAANFSVGVNVLLKLLEKAAKVMGDYTDIEIIEAHHRHKVDAPSGTALAMGEAIAGALNKDLKECAVYSREGHTGERVPGTIGFATVRAGDIVGEHTAMFADIGERIEITHKASSRMTFANGAVRSALWLKDKKNGLFDMRDVLDLNSL.

NAD(+) contacts are provided by residues 12-17 and E38; that span reads GAGGRM. Residue R39 participates in NADP(+) binding. NAD(+) contacts are provided by residues 102 to 104 and 126 to 129; these read GTT and AANF. The active-site Proton donor/acceptor is the H159. H160 provides a ligand contact to (S)-2,3,4,5-tetrahydrodipicolinate. The active-site Proton donor is the K163. 169–170 provides a ligand contact to (S)-2,3,4,5-tetrahydrodipicolinate; sequence GT.

This sequence belongs to the DapB family. Homotetramer.

It is found in the cytoplasm. It carries out the reaction (S)-2,3,4,5-tetrahydrodipicolinate + NAD(+) + H2O = (2S,4S)-4-hydroxy-2,3,4,5-tetrahydrodipicolinate + NADH + H(+). The enzyme catalyses (S)-2,3,4,5-tetrahydrodipicolinate + NADP(+) + H2O = (2S,4S)-4-hydroxy-2,3,4,5-tetrahydrodipicolinate + NADPH + H(+). The protein operates within amino-acid biosynthesis; L-lysine biosynthesis via DAP pathway; (S)-tetrahydrodipicolinate from L-aspartate: step 4/4. Its function is as follows. Catalyzes the conversion of 4-hydroxy-tetrahydrodipicolinate (HTPA) to tetrahydrodipicolinate. The sequence is that of 4-hydroxy-tetrahydrodipicolinate reductase from Klebsiella pneumoniae (strain 342).